The following is a 495-amino-acid chain: Glycerol kinase (495 aa).

Position 11 (threonine 11) interacts with ADP. Residues threonine 11, threonine 12, and serine 13 each contribute to the ATP site. Sn-glycerol 3-phosphate is bound at residue threonine 11. Arginine 15 is an ADP binding site. Sn-glycerol 3-phosphate is bound by residues arginine 81, glutamate 82, tyrosine 133, and aspartate 242. Positions 81, 82, 133, 242, and 243 each coordinate glycerol. Residues threonine 264 and glycine 307 each contribute to the ADP site. Residues threonine 264, glycine 307, glutamine 311, and glycine 408 each coordinate ATP. 2 residues coordinate ADP: glycine 408 and asparagine 412.

This sequence belongs to the FGGY kinase family.

It carries out the reaction glycerol + ATP = sn-glycerol 3-phosphate + ADP + H(+). It participates in polyol metabolism; glycerol degradation via glycerol kinase pathway; sn-glycerol 3-phosphate from glycerol: step 1/1. Inhibited by fructose 1,6-bisphosphate (FBP). Functionally, key enzyme in the regulation of glycerol uptake and metabolism. Catalyzes the phosphorylation of glycerol to yield sn-glycerol 3-phosphate. The chain is Glycerol kinase from Alkalilimnicola ehrlichii (strain ATCC BAA-1101 / DSM 17681 / MLHE-1).